Reading from the N-terminus, the 338-residue chain is Nuclear hormone receptor family member nhr-52 (338 aa).

The segment at residues 1 to 75 (MKCLVCCSYA…IGMRFSEPKQ (75 aa)) is a DNA-binding region (nuclear receptor). 2 NR C4-type zinc fingers span residues 3–23 (CLVC…CSAC) and 39–63 (CKYD…FKKC). The NR LBD domain occupies 98–337 (KDGVHYSNFL…KKLVNDIIIR (240 aa)).

The protein belongs to the nuclear hormone receptor family.

It localises to the nucleus. In terms of biological role, orphan nuclear receptor. This Caenorhabditis elegans protein is Nuclear hormone receptor family member nhr-52 (nhr-52).